The sequence spans 538 residues: Putative cysteine ligase BshC (538 aa).

Residues 460-484 (KINEQIELLERMLKRNVEKKHEVEL) adopt a coiled-coil conformation.

Belongs to the BshC family.

Functionally, involved in bacillithiol (BSH) biosynthesis. May catalyze the last step of the pathway, the addition of cysteine to glucosamine malate (GlcN-Mal) to generate BSH. In Bacillus thuringiensis (strain Al Hakam), this protein is Putative cysteine ligase BshC.